Consider the following 124-residue polypeptide: Small ribosomal subunit protein bS6 (124 aa).

Belongs to the bacterial ribosomal protein bS6 family.

Functionally, binds together with bS18 to 16S ribosomal RNA. This chain is Small ribosomal subunit protein bS6, found in Bordetella avium (strain 197N).